The sequence spans 190 residues: Adenylate kinase (190 aa).

Gly-12 to Thr-17 is an ATP binding site. The NMP stretch occupies residues Ser-34–Val-63. AMP-binding positions include Thr-35, Arg-40, Asn-61 to Val-63, Gly-88 to Arg-91, and Gln-95. The interval Gly-130–Asp-136 is LID. Arg-131 lines the ATP pocket. Residues Arg-133 and Arg-145 each coordinate AMP. Arg-173 contacts ATP.

This sequence belongs to the adenylate kinase family. As to quaternary structure, monomer.

The protein localises to the cytoplasm. It catalyses the reaction AMP + ATP = 2 ADP. It participates in purine metabolism; AMP biosynthesis via salvage pathway; AMP from ADP: step 1/1. Its function is as follows. Catalyzes the reversible transfer of the terminal phosphate group between ATP and AMP. Plays an important role in cellular energy homeostasis and in adenine nucleotide metabolism. This chain is Adenylate kinase, found in Helicobacter hepaticus (strain ATCC 51449 / 3B1).